Reading from the N-terminus, the 210-residue chain is Cytochrome c oxidase subunit 2 (210 aa).

Residues 1–20 are Mitochondrial intermembrane-facing; sequence MAFILSFWMIFLLDSVIVLL. A helical membrane pass occupies residues 21-42; that stretch reads SFVCFVCVWICALLFSTVLLVS. The Mitochondrial matrix segment spans residues 43 to 60; the sequence is KLNNIYCTWDFTASKFID. The chain crosses the membrane as a helical span at residues 61–86; sequence VYWFTIGGMFSLGLLLRLCLLLYFGH. The Mitochondrial intermembrane segment spans residues 87 to 210; the sequence is LNFVSFDLCK…GFMPIVICFI (124 aa). 6 residues coordinate Cu cation: histidine 157, cysteine 192, glutamate 194, cysteine 196, histidine 200, and methionine 203. Glutamate 194 is a binding site for Mg(2+).

Belongs to the cytochrome c oxidase subunit 2 family. As to quaternary structure, component of the cytochrome c oxidase (complex IV, CIV), a multisubunit enzyme composed of a catalytic core of 3 subunits and several supernumerary subunits. The complex exists as a monomer or a dimer and forms supercomplexes (SCs) in the inner mitochondrial membrane with ubiquinol-cytochrome c oxidoreductase (cytochrome b-c1 complex, complex III, CIII). The cofactor is Cu cation.

It is found in the mitochondrion inner membrane. It carries out the reaction 4 Fe(II)-[cytochrome c] + O2 + 8 H(+)(in) = 4 Fe(III)-[cytochrome c] + 2 H2O + 4 H(+)(out). Component of the cytochrome c oxidase, the last enzyme in the mitochondrial electron transport chain which drives oxidative phosphorylation. The respiratory chain contains 3 multisubunit complexes succinate dehydrogenase (complex II, CII), ubiquinol-cytochrome c oxidoreductase (cytochrome b-c1 complex, complex III, CIII) and cytochrome c oxidase (complex IV, CIV), that cooperate to transfer electrons derived from NADH and succinate to molecular oxygen, creating an electrochemical gradient over the inner membrane that drives transmembrane transport and the ATP synthase. Cytochrome c oxidase is the component of the respiratory chain that catalyzes the reduction of oxygen to water. Electrons originating from reduced cytochrome c in the intermembrane space (IMS) are transferred via the dinuclear copper A center (CU(A)) of subunit 2 and heme A of subunit 1 to the active site in subunit 1, a binuclear center (BNC) formed by heme A3 and copper B (CU(B)). The BNC reduces molecular oxygen to 2 water molecules using 4 electrons from cytochrome c in the IMS and 4 protons from the mitochondrial matrix. The chain is Cytochrome c oxidase subunit 2 from Leishmania tarentolae (Sauroleishmania tarentolae).